A 1193-amino-acid polypeptide reads, in one-letter code: uncharacterized protein (1193 aa).

Positions 1 to 25 (MKIKFINYLLLFFIIFLNYNGFVKS) are cleaved as a signal peptide. The Extracellular portion of the chain corresponds to 26–1172 (DCYQELDLVL…PQDPSDELST (1147 aa)). Asn-90, Asn-183, Asn-226, Asn-265, Asn-281, Asn-345, Asn-357, Asn-436, Asn-516, Asn-552, Asn-583, Asn-627, Asn-712, Asn-765, Asn-822, Asn-938, Asn-1038, and Asn-1092 each carry an N-linked (GlcNAc...) asparagine glycan. A helical transmembrane segment spans residues 1173–1193 (SSFVQVNLLFLSILIFTIFIF).

It is found in the membrane. This is an uncharacterized protein from Dictyostelium discoideum (Social amoeba).